The following is a 356-amino-acid chain: Histidinol-phosphate aminotransferase (356 aa).

Lys214 is subject to N6-(pyridoxal phosphate)lysine.

It belongs to the class-II pyridoxal-phosphate-dependent aminotransferase family. Histidinol-phosphate aminotransferase subfamily. Homodimer. It depends on pyridoxal 5'-phosphate as a cofactor.

It catalyses the reaction L-histidinol phosphate + 2-oxoglutarate = 3-(imidazol-4-yl)-2-oxopropyl phosphate + L-glutamate. Its pathway is amino-acid biosynthesis; L-histidine biosynthesis; L-histidine from 5-phospho-alpha-D-ribose 1-diphosphate: step 7/9. The protein is Histidinol-phosphate aminotransferase of Shigella sonnei (strain Ss046).